The chain runs to 310 residues: Malate dehydrogenase (310 aa).

Residues 7 to 12 and Asp32 each bind NAD(+); that span reads GAGNVG. Positions 81 and 87 each coordinate substrate. Residues Asn94 and 117-119 each bind NAD(+); that span reads VSN. Residues Asn119 and Arg150 each contribute to the substrate site. The active-site Proton acceptor is His174.

This sequence belongs to the LDH/MDH superfamily. MDH type 3 family.

The catalysed reaction is (S)-malate + NAD(+) = oxaloacetate + NADH + H(+). Functionally, catalyzes the reversible oxidation of malate to oxaloacetate. The sequence is that of Malate dehydrogenase from Chloroherpeton thalassium (strain ATCC 35110 / GB-78).